A 283-amino-acid chain; its full sequence is Protease HtpX (283 aa).

A run of 2 helical transmembrane segments spans residues 4–24 (ILLF…ILNV) and 33–53 (GGIL…SLFL). His-139 provides a ligand contact to Zn(2+). Glu-140 is an active-site residue. His-143 is a Zn(2+) binding site. The next 2 membrane-spanning stretches (helical) occupy residues 147–167 (GDMV…IFLS) and 190–210 (IYFL…SIIA). Residue Glu-218 participates in Zn(2+) binding.

It belongs to the peptidase M48B family. It depends on Zn(2+) as a cofactor.

Its subcellular location is the cell inner membrane. The sequence is that of Protease HtpX from Haemophilus influenzae (strain 86-028NP).